We begin with the raw amino-acid sequence, 105 residues long: Endogenous retrovirus group K member 6 Rec protein (105 aa).

Positions 1-49 (MNPSEMQRKAPPRRRRHRNRAPLTHKMNKMVTSEEQMKLPSTKKAEPPT) are disordered. A compositionally biased stretch (basic residues) spans 10–20 (APPRRRRHRNR). The Nuclear localization signal signature appears at 13 to 20 (RRRRHRNR). Positions 50-59 (WAQLKKLTQL) match the Nuclear export signal motif.

Forms homodimers, homotrimers, and homotetramers via a C-terminal domain. Associates with XPO1 and with ZNF145. In terms of tissue distribution, expressed at higher level in placenta, expressed at lower level in several organs and cell lines.

Its subcellular location is the cytoplasm. The protein localises to the nucleus. It is found in the nucleolus. Its function is as follows. Retroviral replication requires the nuclear export and translation of unspliced, singly-spliced and multiply-spliced derivatives of the initial genomic transcript. Rec interacts with a highly structured RNA element (RcRE) present in the viral 3'LTR and recruits the cellular nuclear export machinery. This permits export to the cytoplasm of unspliced genomic or incompletely spliced subgenomic viral transcripts. This Homo sapiens (Human) protein is Endogenous retrovirus group K member 6 Rec protein (ERVK-6).